Consider the following 144-residue polypeptide: Large ribosomal subunit protein uL15 (144 aa).

A disordered region spans residues methionine 1–glutamine 54. A compositionally biased stretch (gly residues) spans arginine 21–glycine 31.

Belongs to the universal ribosomal protein uL15 family. As to quaternary structure, part of the 50S ribosomal subunit.

In terms of biological role, binds to the 23S rRNA. In Enterobacter sp. (strain 638), this protein is Large ribosomal subunit protein uL15.